The sequence spans 232 residues: Histone H1-II (232 aa).

Residues 1–18 (MSDPAPEVAPAAPVASPA) show a composition bias toward low complexity. Disordered stretches follow at residues 1–44 (MSDP…PPVS) and 103–232 (GKGA…AKKA). The 76-residue stretch at 39 to 114 (THPPVSEMVV…GASGSFKLPA (76 aa)) folds into the H15 domain. Composition is skewed to basic residues over residues 149–171 (SIAKKPKAATATKVKKPVAKSTK) and 179–232 (AAKK…AKKA).

This sequence belongs to the histone H1/H5 family.

The protein localises to the nucleus. It localises to the chromosome. Its function is as follows. Histones H1 are necessary for the condensation of nucleosome chains into higher-order structures. This Glyptotendipes barbipes (Midge) protein is Histone H1-II.